Reading from the N-terminus, the 516-residue chain is Glycosyl hydrolase family 109 protein 4 (516 aa).

Residues M1–A18 form the signal peptide. A lipid anchor (N-palmitoyl cysteine) is attached at C19. A lipid anchor (S-diacylglycerol cysteine) is attached at C19. NAD(+)-binding positions include M76–R77, D98, W146–H149, E166–V167, and N195. Substrate is bound by residues Y224, R247, Y259–H262, and Y337. Y259 is an NAD(+) binding site.

The protein belongs to the Gfo/Idh/MocA family. Glycosyl hydrolase 109 subfamily. NAD(+) is required as a cofactor.

It localises to the cell membrane. Glycosidase. The protein is Glycosyl hydrolase family 109 protein 4 of Phocaeicola vulgatus (strain ATCC 8482 / DSM 1447 / JCM 5826 / CCUG 4940 / NBRC 14291 / NCTC 11154) (Bacteroides vulgatus).